Here is a 687-residue protein sequence, read N- to C-terminus: Probable intron-encoded endonuclease aI3 (687 aa).

The interval 1–374 (MKQMSYVTRW…NASMDVAFHD (374 aa)) is COX1 exons 1 to 3 encoded. 10 helical membrane passes run 19-39 (IGMT…GMSV), 69-89 (LLMM…NFFL), 103-123 (LNNI…CSVL), 152-172 (AMFA…NFMV), 188-208 (PLFA…LPVL), 240-260 (LFWF…FGVM), 273-293 (FGEM…FLVW), 315-335 (MVIA…IYGG), 341-361 (VPML…LTGV), and 376-396 (IFIY…NNYT). Residues 375-687 (RIFIYYVSFF…KKESLMKFLK (313 aa)) form a COX1 intron 3 encoded region.

In the C-terminal section; belongs to the LAGLIDADG endonuclease family. This sequence in the N-terminal section; belongs to the heme-copper respiratory oxidase family. Post-translationally, the mature protein may arise from proteolytic cleavage of an in-frame translation of COX1 exons 1 to 3 plus intron 3, containing the aI3 open reading frame.

Its subcellular location is the mitochondrion. The protein localises to the membrane. In terms of biological role, mitochondrial DNA endonuclease involved in intron homing. This chain is Probable intron-encoded endonuclease aI3 (aI3), found in Debaryomyces hansenii (strain ATCC 36239 / CBS 767 / BCRC 21394 / JCM 1990 / NBRC 0083 / IGC 2968) (Yeast).